A 505-amino-acid chain; its full sequence is Acetyl-coenzyme A carboxylase carboxyl transferase subunit beta, chloroplastic (505 aa).

Residues 189-205 (ESVSNSKSGSSSIRTGG) show a composition bias toward low complexity. The segment at 189–213 (ESVSNSKSGSSSIRTGGNSSDFNRR) is disordered. The CoA carboxyltransferase N-terminal domain maps to 228 to 499 (LWVQCENCYG…NQNSSRALGS (272 aa)). Positions 232, 235, 251, and 254 each coordinate Zn(2+). The C4-type zinc finger occupies 232 to 254 (CENCYGLNYKKFVSFKMHICEQC).

This sequence belongs to the AccD/PCCB family. As to quaternary structure, acetyl-CoA carboxylase is a heterohexamer composed of biotin carboxyl carrier protein, biotin carboxylase and 2 subunits each of ACCase subunit alpha and ACCase plastid-coded subunit beta (accD). Zn(2+) is required as a cofactor.

The protein localises to the plastid. Its subcellular location is the chloroplast stroma. The enzyme catalyses N(6)-carboxybiotinyl-L-lysyl-[protein] + acetyl-CoA = N(6)-biotinyl-L-lysyl-[protein] + malonyl-CoA. It functions in the pathway lipid metabolism; malonyl-CoA biosynthesis; malonyl-CoA from acetyl-CoA: step 1/1. Its function is as follows. Component of the acetyl coenzyme A carboxylase (ACC) complex. Biotin carboxylase (BC) catalyzes the carboxylation of biotin on its carrier protein (BCCP) and then the CO(2) group is transferred by the transcarboxylase to acetyl-CoA to form malonyl-CoA. This is Acetyl-coenzyme A carboxylase carboxyl transferase subunit beta, chloroplastic from Calycanthus floridus var. glaucus (Eastern sweetshrub).